A 224-amino-acid chain; its full sequence is 7-cyano-7-deazaguanine synthase (224 aa).

ATP is bound at residue 8-18 (LSGGMDSAAVI). Cys186, Cys196, Cys199, and Cys202 together coordinate Zn(2+).

This sequence belongs to the QueC family. It depends on Zn(2+) as a cofactor.

The catalysed reaction is 7-carboxy-7-deazaguanine + NH4(+) + ATP = 7-cyano-7-deazaguanine + ADP + phosphate + H2O + H(+). The protein operates within purine metabolism; 7-cyano-7-deazaguanine biosynthesis. Catalyzes the ATP-dependent conversion of 7-carboxy-7-deazaguanine (CDG) to 7-cyano-7-deazaguanine (preQ(0)). The sequence is that of 7-cyano-7-deazaguanine synthase from Xanthomonas euvesicatoria pv. vesicatoria (strain 85-10) (Xanthomonas campestris pv. vesicatoria).